The primary structure comprises 153 residues: Coiled-coil domain-containing protein 182 (153 aa).

The stretch at 46–109 (ADLEILQQKV…RLREEEDRGI (64 aa)) forms a coiled coil.

The chain is Coiled-coil domain-containing protein 182 (CCDC182) from Homo sapiens (Human).